We begin with the raw amino-acid sequence, 180 residues long: Inner membrane-spanning protein YciB (180 aa).

Transmembrane regions (helical) follow at residues 4–24 (FLSEIGPVIAFFAGFFYGGGI), 25–45 (QHATLYMLITSVICITLCYVI), 49–69 (VSKLSIISTTVLLVSGSITLI), 76–96 (IKIKPTILYVIFGIIFLMSGI), 118–138 (ITLSYRTAAFFFFMAVVNEVV), and 150–170 (FKVFGVIPITFIFILLQLPLL).

It belongs to the YciB family.

The protein resides in the cell inner membrane. Its function is as follows. Plays a role in cell envelope biogenesis, maintenance of cell envelope integrity and membrane homeostasis. In Rickettsia rickettsii (strain Iowa), this protein is Inner membrane-spanning protein YciB.